The primary structure comprises 305 residues: Olfactory receptor 4B13 (305 aa).

At 1–25 the chain is on the extracellular side; it reads MANKNNVTELIFTGLFQDPEVQKVC. The N-linked (GlcNAc...) asparagine glycan is linked to Asn6. The helical transmembrane segment at 26–46 threads the bilayer; sequence FVLFLPVYLATLLGNSLILVA. Residues 47 to 55 lie on the Cytoplasmic side of the membrane; the sequence is VSISKTLHS. Residues 56–76 traverse the membrane as a helical segment; that stretch reads PMYFFLSSLSLVEICYSSTIV. Residues 77–95 are Extracellular-facing; that stretch reads PKFITDLLAKVKTISLKGC. A disulfide bridge links Cys95 with Cys187. Residues 96–116 traverse the membrane as a helical segment; that stretch reads LTQIFFSHFFGVVEVILLVVM. Residues 117–141 are Cytoplasmic-facing; sequence AYDRYVAICKPLHYMNIMSRQVCHM. The helical transmembrane segment at 142–162 threads the bilayer; the sequence is LVAGSWLGGFIHSIIQIIITI. Topologically, residues 163–202 are extracellular; that stretch reads PLPFCGPNVIDHYFCDLQQLFKLACTDTFMEGFIVMANSG. Residues 203 to 223 form a helical membrane-spanning segment; it reads LISIVSLFILVSSYAVILISL. Topologically, residues 224–236 are cytoplasmic; that stretch reads RKRSAEGRRKALS. A helical membrane pass occupies residues 237-257; that stretch reads TCASHITVVILFFVPGAFIYM. Residues 258–266 lie on the Extracellular side of the membrane; that stretch reads RPSSTFTED. A helical membrane pass occupies residues 267–287; sequence KLVSVFYTVITPMLNPIVYTL. The Cytoplasmic segment spans residues 288 to 305; it reads RNTEMKNAIRMSWKQKDS.

This sequence belongs to the G-protein coupled receptor 1 family.

It localises to the cell membrane. Odorant receptor. This Mus musculus (Mouse) protein is Olfactory receptor 4B13.